The following is a 419-amino-acid chain: L-rhamnose isomerase (419 aa).

Positions 262, 294, and 296 each coordinate Mn(2+).

It belongs to the rhamnose isomerase family. As to quaternary structure, homotetramer. Mn(2+) is required as a cofactor.

The protein localises to the cytoplasm. The enzyme catalyses L-rhamnopyranose = L-rhamnulose. It participates in carbohydrate degradation; L-rhamnose degradation; glycerone phosphate from L-rhamnose: step 1/3. Functionally, catalyzes the interconversion of L-rhamnose and L-rhamnulose. This Escherichia coli O157:H7 protein is L-rhamnose isomerase.